We begin with the raw amino-acid sequence, 151 residues long: Differentiation-associated protein 2 (151 aa).

The first 22 residues, Met1–Ala22, serve as a signal peptide directing secretion.

It localises to the endoplasmic reticulum. The protein localises to the vacuole. Functionally, has an essential role in the initiation of differentiation. Also required for cAMP signaling. The sequence is that of Differentiation-associated protein 2 (dia2) from Dictyostelium discoideum (Social amoeba).